A 318-amino-acid polypeptide reads, in one-letter code: Methionyl-tRNA formyltransferase (318 aa).

Residue 114–117 (SLLP) coordinates (6S)-5,6,7,8-tetrahydrofolate.

Belongs to the Fmt family.

The catalysed reaction is L-methionyl-tRNA(fMet) + (6R)-10-formyltetrahydrofolate = N-formyl-L-methionyl-tRNA(fMet) + (6S)-5,6,7,8-tetrahydrofolate + H(+). Functionally, attaches a formyl group to the free amino group of methionyl-tRNA(fMet). The formyl group appears to play a dual role in the initiator identity of N-formylmethionyl-tRNA by promoting its recognition by IF2 and preventing the misappropriation of this tRNA by the elongation apparatus. The sequence is that of Methionyl-tRNA formyltransferase from Protochlamydia amoebophila (strain UWE25).